The following is a 104-amino-acid chain: Large ribosomal subunit protein uL24 (104 aa).

The protein belongs to the universal ribosomal protein uL24 family. Part of the 50S ribosomal subunit.

Its function is as follows. One of two assembly initiator proteins, it binds directly to the 5'-end of the 23S rRNA, where it nucleates assembly of the 50S subunit. In terms of biological role, one of the proteins that surrounds the polypeptide exit tunnel on the outside of the subunit. The chain is Large ribosomal subunit protein uL24 from Shewanella woodyi (strain ATCC 51908 / MS32).